Consider the following 616-residue polypeptide: Dihydroxy-acid dehydratase (616 aa).

Aspartate 81 contributes to the Mg(2+) binding site. Cysteine 122 lines the [2Fe-2S] cluster pocket. The Mg(2+) site is built by aspartate 123 and lysine 124. Lysine 124 bears the N6-carboxylysine mark. A [2Fe-2S] cluster-binding site is contributed by cysteine 195. Glutamate 491 contributes to the Mg(2+) binding site. Serine 517 acts as the Proton acceptor in catalysis.

The protein belongs to the IlvD/Edd family. As to quaternary structure, homodimer. The cofactor is [2Fe-2S] cluster. It depends on Mg(2+) as a cofactor.

The catalysed reaction is (2R)-2,3-dihydroxy-3-methylbutanoate = 3-methyl-2-oxobutanoate + H2O. It carries out the reaction (2R,3R)-2,3-dihydroxy-3-methylpentanoate = (S)-3-methyl-2-oxopentanoate + H2O. It functions in the pathway amino-acid biosynthesis; L-isoleucine biosynthesis; L-isoleucine from 2-oxobutanoate: step 3/4. It participates in amino-acid biosynthesis; L-valine biosynthesis; L-valine from pyruvate: step 3/4. Its function is as follows. Functions in the biosynthesis of branched-chain amino acids. Catalyzes the dehydration of (2R,3R)-2,3-dihydroxy-3-methylpentanoate (2,3-dihydroxy-3-methylvalerate) into 2-oxo-3-methylpentanoate (2-oxo-3-methylvalerate) and of (2R)-2,3-dihydroxy-3-methylbutanoate (2,3-dihydroxyisovalerate) into 2-oxo-3-methylbutanoate (2-oxoisovalerate), the penultimate precursor to L-isoleucine and L-valine, respectively. This chain is Dihydroxy-acid dehydratase, found in Salmonella schwarzengrund (strain CVM19633).